A 552-amino-acid polypeptide reads, in one-letter code: Indole-3-pyruvate decarboxylase (552 aa).

Glu-52 provides a ligand contact to thiamine diphosphate. The segment at 385-466 (TSAFGAIDLR…ILVLNNEGYT (82 aa)) is thiamine pyrophosphate binding. Positions 435 and 462 each coordinate Mg(2+).

Belongs to the TPP enzyme family. In terms of assembly, homotetramer. A metal cation serves as cofactor. It depends on thiamine diphosphate as a cofactor.

The catalysed reaction is indole-3-pyruvate + H(+) = indole-3-acetaldehyde + CO2. The protein operates within plant hormone metabolism; auxin biosynthesis. In Enterobacter cloacae, this protein is Indole-3-pyruvate decarboxylase (ipdC).